We begin with the raw amino-acid sequence, 172 residues long: NADH-ubiquinone oxidoreductase chain 6 (172 aa).

Transmembrane regions (helical) follow at residues 1–21 (MTYF…AVAS), 25–45 (PYFA…VLVG), 53–73 (LVLF…AALA), 86–106 (VLGY…IFWG), and 140–160 (GGML…VLEL).

The protein belongs to the complex I subunit 6 family.

The protein localises to the mitochondrion membrane. It carries out the reaction a ubiquinone + NADH + 5 H(+)(in) = a ubiquinol + NAD(+) + 4 H(+)(out). In terms of biological role, core subunit of the mitochondrial membrane respiratory chain NADH dehydrogenase (Complex I) that is believed to belong to the minimal assembly required for catalysis. Complex I functions in the transfer of electrons from NADH to the respiratory chain. The immediate electron acceptor for the enzyme is believed to be ubiquinone. The sequence is that of NADH-ubiquinone oxidoreductase chain 6 (MT-ND6) from Cyprinus carpio (Common carp).